Here is a 549-residue protein sequence, read N- to C-terminus: Hydroxylamine reductase (549 aa).

Residues Cys5, Cys8, Cys17, and Cys23 each coordinate [4Fe-4S] cluster. Residues His244, Glu268, Cys312, Cys403, Cys431, Cys456, Glu491, and Lys493 each coordinate hybrid [4Fe-2O-2S] cluster. Cys403 carries the post-translational modification Cysteine persulfide.

It belongs to the HCP family. [4Fe-4S] cluster serves as cofactor. It depends on hybrid [4Fe-2O-2S] cluster as a cofactor.

The protein localises to the cytoplasm. The catalysed reaction is A + NH4(+) + H2O = hydroxylamine + AH2 + H(+). Its function is as follows. Catalyzes the reduction of hydroxylamine to form NH(3) and H(2)O. In Caldanaerobacter subterraneus subsp. tengcongensis (strain DSM 15242 / JCM 11007 / NBRC 100824 / MB4) (Thermoanaerobacter tengcongensis), this protein is Hydroxylamine reductase.